We begin with the raw amino-acid sequence, 160 residues long: SsrA-binding protein (160 aa).

The disordered stretch occupies residues methionine 1–arginine 23.

The protein belongs to the SmpB family.

It localises to the cytoplasm. Its function is as follows. Required for rescue of stalled ribosomes mediated by trans-translation. Binds to transfer-messenger RNA (tmRNA), required for stable association of tmRNA with ribosomes. tmRNA and SmpB together mimic tRNA shape, replacing the anticodon stem-loop with SmpB. tmRNA is encoded by the ssrA gene; the 2 termini fold to resemble tRNA(Ala) and it encodes a 'tag peptide', a short internal open reading frame. During trans-translation Ala-aminoacylated tmRNA acts like a tRNA, entering the A-site of stalled ribosomes, displacing the stalled mRNA. The ribosome then switches to translate the ORF on the tmRNA; the nascent peptide is terminated with the 'tag peptide' encoded by the tmRNA and targeted for degradation. The ribosome is freed to recommence translation, which seems to be the essential function of trans-translation. The chain is SsrA-binding protein from Thermobifida fusca (strain YX).